The primary structure comprises 234 residues: Ubiquinone biosynthesis O-methyltransferase (234 aa).

S-adenosyl-L-methionine is bound by residues Arg-39, Gly-59, Asp-80, and Met-124.

This sequence belongs to the methyltransferase superfamily. UbiG/COQ3 family.

It carries out the reaction a 3-demethylubiquinol + S-adenosyl-L-methionine = a ubiquinol + S-adenosyl-L-homocysteine + H(+). It catalyses the reaction a 3-(all-trans-polyprenyl)benzene-1,2-diol + S-adenosyl-L-methionine = a 2-methoxy-6-(all-trans-polyprenyl)phenol + S-adenosyl-L-homocysteine + H(+). It functions in the pathway cofactor biosynthesis; ubiquinone biosynthesis. O-methyltransferase that catalyzes the 2 O-methylation steps in the ubiquinone biosynthetic pathway. This chain is Ubiquinone biosynthesis O-methyltransferase, found in Aliivibrio fischeri (strain ATCC 700601 / ES114) (Vibrio fischeri).